Here is an 89-residue protein sequence, read N- to C-terminus: Large ribosomal subunit protein eL31 (89 aa).

It belongs to the eukaryotic ribosomal protein eL31 family.

This chain is Large ribosomal subunit protein eL31 (rpl31e), found in Thermoplasma acidophilum (strain ATCC 25905 / DSM 1728 / JCM 9062 / NBRC 15155 / AMRC-C165).